Reading from the N-terminus, the 520-residue chain is MSRQLTLYPGAERLGFSGCSAVISGRLSGSHASVRAGVKGAAFGSRSLFCVGGGRRLALSSAGRSGGFTLGHGGASGGRPGGFVGTVFGSAGLGPTCPSVCPPGGIPQVVVNKSLLAPLNVELDPEIQKVRAQEREQIKALNNKFASFIDKVRFLEQQNQVLETKWELLQQLDLNNSKRSLEPVHESYISNLQKQLEILSGDRVRLDSELRNMREVVEDCKKRYEVEINRRTAAENEFVVLKKDVDAAYMNKVELQAKVDSLTDDIKFFKVLFEGEIAQMQSHISDTSVILSMDNNRQLDLDSILAEVRAQYEEIAVKSKAETENMYQCKIQELQATAGQHGDDLKHTKSEITEINRLIQRIHSEIGNMKKQCSNLETAIADAEQRGDCALKDARAKLDQLEGALQQAKEELARMLREHQELMNVKLALDMEIATYRKLLESEESRMAGEYPNSVSISVISSTNAGPGGAGFSVGFGASSSYNYRPLALEVKTKGSCGSELKDPPAKTSGSSGTTKKTSR.

The tract at residues 1 to 133 (MSRQLTLYPG…DPEIQKVRAQ (133 aa)) is head. The coil 1A stretch occupies residues 134 to 169 (EREQIKALNNKFASFIDKVRFLEQQNQVLETKWELL). Residues 134–447 (EREQIKALNN…KLLESEESRM (314 aa)) enclose the IF rod domain. Residues 170-188 (QQLDLNNSKRSLEPVHESY) form a linker 1 region. The coil 1B stretch occupies residues 189–280 (ISNLQKQLEI…VLFEGEIAQM (92 aa)). Positions 281–304 (QSHISDTSVILSMDNNRQLDLDSI) are linker 12. The coil 2 stretch occupies residues 305 to 443 (LAEVRAQYEE…ATYRKLLESE (139 aa)). The tract at residues 444 to 520 (ESRMAGEYPN…SSGTTKKTSR (77 aa)) is tail. A disordered region spans residues 494 to 520 (KGSCGSELKDPPAKTSGSSGTTKKTSR). Low complexity predominate over residues 507 to 520 (KTSGSSGTTKKTSR).

Belongs to the intermediate filament family. Heterotetramer of two type I and two type II keratins.

Its function is as follows. Has a role in hair formation. Specific component of keratin intermediate filaments in the inner root sheath (IRS) of the hair follicle. In Mus musculus (Mouse), this protein is Keratin, type II cytoskeletal 72 (Krt72).